Consider the following 127-residue polypeptide: UPF0102 protein NFA_41430 (127 aa).

This sequence belongs to the UPF0102 family.

This Nocardia farcinica (strain IFM 10152) protein is UPF0102 protein NFA_41430.